The following is a 344-amino-acid chain: Succinylglutamate desuccinylase (344 aa).

His-63, Glu-66, and His-160 together coordinate Zn(2+). Glu-224 is a catalytic residue.

This sequence belongs to the AspA/AstE family. Succinylglutamate desuccinylase subfamily. Requires Zn(2+) as cofactor.

The catalysed reaction is N-succinyl-L-glutamate + H2O = L-glutamate + succinate. It participates in amino-acid degradation; L-arginine degradation via AST pathway; L-glutamate and succinate from L-arginine: step 5/5. Transforms N(2)-succinylglutamate into succinate and glutamate. This is Succinylglutamate desuccinylase from Shewanella baltica (strain OS223).